Reading from the N-terminus, the 371-residue chain is MELAEDWLVESLRLYQDFHAFDLSGATRVLEWIGEKGVFVAGYESLKKNEILHLILPLRLSVQENQGLHPERDFKVRHGGFSDRSVFDLKHVPDTRLLVTSGLPGCYIQMWQVREDNDVIEAVSTIDVQDKEESLWPRVSVFCSKAPGILHGARLSGLRTVDVESQKITYSSGTADSESLSCLQVLDANTFAFCGNSGRLGLVDTRQKWAALETVSPGSGCSGERWCAEVRNKGQGPGPCIASLGSDGQLCLLDSRNLCHPVSSAQCPVFKPSPDPELLRVTWAPGLDNCLAISGFDGTVQIYDVTSWDGKKTQAEPLFTHKGHIFLDGNDVDSAPLVTTHTWHPRKPRTLLSAASDSSLHVWDWVDLQAS.

3 WD repeats span residues 81–121 (FSDR…DVIE), 273–313 (SPDP…GKKT), and 333–371 (DSAPLVTTHTWHPRKPRTLLSAASDSSLHVWDWVDLQAS).

The protein belongs to the WD repeat WDR73 family. As to quaternary structure, interacts with INTS9 and INTS11; the interaction is direct. Part of the multiprotein complex composed of BRAT1, WDR73, as well as integrator complex subunits INTS9 and INTS11.

The protein localises to the cytoplasm. Its subcellular location is the cytoskeleton. The protein resides in the spindle. It localises to the spindle pole. It is found in the cleavage furrow. Functionally, component of a multiprotein complex required for the assembly of the RNA endonuclease module of the integrator complex. Associates with INTS9 and INTS11 in the cytoplasm, stabilizing the INTS9-INTS11 heterodimer and blocking the active site of INTS11. BRAT1 then joins the complex and plugs the active site of INTS11, leading to WDR73 release and nuclear import of INTS9 and INTS11. This chain is Integrator complex assembly factor WDR73 (Wdr73), found in Mus musculus (Mouse).